The following is a 79-amino-acid chain: MRVLFIIAVLALISVGCYASEMKDRSSRNEVLSAIFAIEEPQERDCLGLFWICNYMDDKCCPGYKCERSSPWCKIDIWG.

Positions 1–19 are cleaved as a signal peptide; that stretch reads MRVLFIIAVLALISVGCYA. A propeptide spanning residues 20–44 is cleaved from the precursor; it reads SEMKDRSSRNEVLSAIFAIEEPQER. 3 disulfides stabilise this stretch: Cys46-Cys61, Cys53-Cys66, and Cys60-Cys73. Trp78 is modified (tryptophan amide).

It belongs to the neurotoxin 10 (Hwtx-1) family. 35 (Jztx-27) subfamily. In terms of tissue distribution, expressed by the venom gland.

The protein localises to the secreted. Functionally, probable ion channel inhibitor. The polypeptide is U24-theraphotoxin-Cg1a (Chilobrachys guangxiensis (Chinese earth tiger tarantula)).